A 498-amino-acid chain; its full sequence is Lipase 3 (498 aa).

A disulfide bridge connects residues C60 and C91. A glycan (N-linked (GlcNAc...) asparagine) is linked at N193. The active-site Acyl-ester intermediate is S200. Residue N384 is glycosylated (N-linked (GlcNAc...) asparagine). Residue H409 is the Charge relay system of the active site. Residue N418 is glycosylated (N-linked (GlcNAc...) asparagine).

Belongs to the type-B carboxylesterase/lipase family.

It carries out the reaction a triacylglycerol + H2O = a diacylglycerol + a fatty acid + H(+). In Yarrowia lipolytica (strain CLIB 122 / E 150) (Yeast), this protein is Lipase 3 (LIP3).